The following is a 130-amino-acid chain: MASLPHPKIVKKHTKKFKRHHSDRYHRVAENWRKQKGIDSVVRRRFRGNISQPKIGYGSNKKTKFLSPSGHKTFLVANVKDLETLTMHTKTYAAEIAHNISAKNRVVILARAKALGIKVTNPKGRLALEA.

Residue serine 40 is modified to Phosphoserine.

The protein belongs to the eukaryotic ribosomal protein eL32 family. In terms of assembly, component of the large ribosomal subunit (LSU). Mature yeast ribosomes consist of a small (40S) and a large (60S) subunit. The 40S small subunit contains 1 molecule of ribosomal RNA (18S rRNA) and 33 different proteins (encoded by 57 genes). The large 60S subunit contains 3 rRNA molecules (25S, 5.8S and 5S rRNA) and 46 different proteins (encoded by 81 genes).

The protein resides in the cytoplasm. Its function is as follows. Component of the ribosome, a large ribonucleoprotein complex responsible for the synthesis of proteins in the cell. The small ribosomal subunit (SSU) binds messenger RNAs (mRNAs) and translates the encoded message by selecting cognate aminoacyl-transfer RNA (tRNA) molecules. The large subunit (LSU) contains the ribosomal catalytic site termed the peptidyl transferase center (PTC), which catalyzes the formation of peptide bonds, thereby polymerizing the amino acids delivered by tRNAs into a polypeptide chain. The nascent polypeptides leave the ribosome through a tunnel in the LSU and interact with protein factors that function in enzymatic processing, targeting, and the membrane insertion of nascent chains at the exit of the ribosomal tunnel. This Saccharomyces cerevisiae (strain ATCC 204508 / S288c) (Baker's yeast) protein is Large ribosomal subunit protein eL32.